The sequence spans 409 residues: Tyrosine--tRNA ligase (409 aa).

A 'HIGH' region motif is present at residues 43–52; sequence PTAPDLHLGH. The 'KMSKS' region motif lies at 227-231; sequence KMSKS. Position 230 (K230) interacts with ATP. One can recognise an S4 RNA-binding domain in the interval 338–399; that stretch reads LALPQLLKLA…GKRKFAKVTL (62 aa).

It belongs to the class-I aminoacyl-tRNA synthetase family. TyrS type 2 subfamily. As to quaternary structure, homodimer.

The protein resides in the cytoplasm. The catalysed reaction is tRNA(Tyr) + L-tyrosine + ATP = L-tyrosyl-tRNA(Tyr) + AMP + diphosphate + H(+). In terms of biological role, catalyzes the attachment of tyrosine to tRNA(Tyr) in a two-step reaction: tyrosine is first activated by ATP to form Tyr-AMP and then transferred to the acceptor end of tRNA(Tyr). This is Tyrosine--tRNA ligase from Nitrosomonas europaea (strain ATCC 19718 / CIP 103999 / KCTC 2705 / NBRC 14298).